Consider the following 158-residue polypeptide: Protein Smg homolog (158 aa).

This sequence belongs to the Smg family.

In Thioalkalivibrio sulfidiphilus (strain HL-EbGR7), this protein is Protein Smg homolog.